The chain runs to 398 residues: Candidapepsin-3 (398 aa).

A signal peptide spans 1–18 (MFLKNIFIALAIALLADA). Residues 19-58 (TPTTSNNSPGFVALNFDVIKTHKNVTGPQGEINTNVNVKR) constitute a propeptide, activation peptide. An N-linked (GlcNAc...) asparagine glycan is attached at N42. In terms of domain architecture, Peptidase A1 spans 72 to 384 (YASDITVGSN…DLDDNEISLA (313 aa)). D90 is an active-site residue. 90-92 (DTG) lines the pepstatin A pocket. Positions 103–112 (VSCQAGQGQD) are enriched in polar residues. Residues 103–139 (VSCQAGQGQDPNFCKNEGTYSPSSSSSSQNLNSPFSI) are disordered. The cysteines at positions 105 and 116 are disulfide-linked. A compositionally biased stretch (low complexity) spans 123 to 138 (SPSSSSSSQNLNSPFS). Pepstatin A is bound by residues 140 to 143 (EYGD) and 274 to 278 (DSGTT). D274 is an active-site residue. Cysteines 312 and 350 form a disulfide. N313 carries an N-linked (GlcNAc...) asparagine glycan.

Belongs to the peptidase A1 family. O-glycosylated.

It is found in the secreted. The enzyme catalyses Preferential cleavage at the carboxyl of hydrophobic amino acids, but fails to cleave 15-Leu-|-Tyr-16, 16-Tyr-|-Leu-17 and 24-Phe-|-Phe-25 of insulin B chain. Activates trypsinogen, and degrades keratin.. The chain is Candidapepsin-3 (SAP3) from Candida albicans (strain WO-1) (Yeast).